The following is a 220-amino-acid chain: Probable nicotinate-nucleotide adenylyltransferase (220 aa).

It belongs to the NadD family.

The catalysed reaction is nicotinate beta-D-ribonucleotide + ATP + H(+) = deamido-NAD(+) + diphosphate. Its pathway is cofactor biosynthesis; NAD(+) biosynthesis; deamido-NAD(+) from nicotinate D-ribonucleotide: step 1/1. Its function is as follows. Catalyzes the reversible adenylation of nicotinate mononucleotide (NaMN) to nicotinic acid adenine dinucleotide (NaAD). The protein is Probable nicotinate-nucleotide adenylyltransferase of Yersinia pseudotuberculosis serotype O:1b (strain IP 31758).